Reading from the N-terminus, the 147-residue chain is MPGKKAPNGEFAGRKLKLKRKKFRWSDIRYKRRVLRLKEKSDPLEGAPQARGIVLEKIAVEAKQPNSGMRKAVRVQLIKNGKVVTAFCPGDGAINFIDEHDEVIIEGIGGPKGGSMGDIPGIRYKVVKVNRVSLKELVKGRKEKPRR.

This sequence belongs to the universal ribosomal protein uS12 family. In terms of assembly, part of the 30S ribosomal subunit.

In terms of biological role, with S4 and S5 plays an important role in translational accuracy. Located at the interface of the 30S and 50S subunits. The protein is Small ribosomal subunit protein uS12 of Pyrococcus horikoshii (strain ATCC 700860 / DSM 12428 / JCM 9974 / NBRC 100139 / OT-3).